The chain runs to 357 residues: Chorismate synthase (357 aa).

Residues 38-49 (EKDIQPDLDRRK) show a composition bias toward basic and acidic residues. Residues 38–60 (EKDIQPDLDRRKPGTSRYTTPRR) form a disordered region. NADP(+) contacts are provided by Arg48 and Arg54. FMN contacts are provided by residues 125–127 (RSS), 243–244 (NA), Gly283, 298–302 (KPTSS), and Arg324.

Belongs to the chorismate synthase family. Homotetramer. It depends on FMNH2 as a cofactor.

It carries out the reaction 5-O-(1-carboxyvinyl)-3-phosphoshikimate = chorismate + phosphate. It participates in metabolic intermediate biosynthesis; chorismate biosynthesis; chorismate from D-erythrose 4-phosphate and phosphoenolpyruvate: step 7/7. Its function is as follows. Catalyzes the anti-1,4-elimination of the C-3 phosphate and the C-6 proR hydrogen from 5-enolpyruvylshikimate-3-phosphate (EPSP) to yield chorismate, which is the branch point compound that serves as the starting substrate for the three terminal pathways of aromatic amino acid biosynthesis. This reaction introduces a second double bond into the aromatic ring system. This is Chorismate synthase from Haemophilus influenzae (strain PittGG).